We begin with the raw amino-acid sequence, 207 residues long: Large ribosomal subunit protein uL4 (207 aa).

A disordered region spans residues 53 to 85; that stretch reads ERSDVARTGKKFGRQKGGGTARHGDRKAPIFIG.

The protein belongs to the universal ribosomal protein uL4 family. In terms of assembly, part of the 50S ribosomal subunit.

One of the primary rRNA binding proteins, this protein initially binds near the 5'-end of the 23S rRNA. It is important during the early stages of 50S assembly. It makes multiple contacts with different domains of the 23S rRNA in the assembled 50S subunit and ribosome. Functionally, forms part of the polypeptide exit tunnel. The sequence is that of Large ribosomal subunit protein uL4 from Novosphingobium aromaticivorans (strain ATCC 700278 / DSM 12444 / CCUG 56034 / CIP 105152 / NBRC 16084 / F199).